A 598-amino-acid chain; its full sequence is 2-succinyl-5-enolpyruvyl-6-hydroxy-3-cyclohexene-1-carboxylate synthase (598 aa).

The protein belongs to the TPP enzyme family. MenD subfamily. In terms of assembly, homodimer. Mg(2+) serves as cofactor. Requires Mn(2+) as cofactor. It depends on thiamine diphosphate as a cofactor.

It carries out the reaction isochorismate + 2-oxoglutarate + H(+) = 5-enolpyruvoyl-6-hydroxy-2-succinyl-cyclohex-3-ene-1-carboxylate + CO2. Its pathway is quinol/quinone metabolism; 1,4-dihydroxy-2-naphthoate biosynthesis; 1,4-dihydroxy-2-naphthoate from chorismate: step 2/7. It functions in the pathway cofactor biosynthesis; phylloquinone biosynthesis. Functionally, catalyzes the thiamine diphosphate-dependent decarboxylation of 2-oxoglutarate and the subsequent addition of the resulting succinic semialdehyde-thiamine pyrophosphate anion to isochorismate to yield 2-succinyl-5-enolpyruvyl-6-hydroxy-3-cyclohexene-1-carboxylate (SEPHCHC). The sequence is that of 2-succinyl-5-enolpyruvyl-6-hydroxy-3-cyclohexene-1-carboxylate synthase from Prochlorococcus marinus (strain NATL1A).